The following is a 275-amino-acid chain: MSATGQSKRLAVPDIAARKGREPVAVLTAYTVSMARLLDPHVEVLLVGDSLGMVLYGFDSTLPVTLDMMIAHGAAVVRGSSRACVVVDMPWASYQEGREQAFRNAARILAETGCAAVKLEGGEEMAETVDFLVRRGIPVMGHVGLTPQAVNALGGYRARGRSDAEQAKILGDARAVAEAGAFALVVEGVVEPLARAVTEAVPCVTIGIGASAACDGQVLVSDDLLGLYGAFTPKFVRRYAELGPVIEEAAATYAADVRARRFPGTEHVFAARKAS.

Mg(2+)-binding residues include Asp-49 and Asp-88. Residues 49-50, Asp-88, and Lys-118 each bind 3-methyl-2-oxobutanoate; that span reads DS. Glu-120 contributes to the Mg(2+) binding site. Residue Glu-187 is the Proton acceptor of the active site.

The protein belongs to the PanB family. Homodecamer; pentamer of dimers. Requires Mg(2+) as cofactor.

Its subcellular location is the cytoplasm. The catalysed reaction is 3-methyl-2-oxobutanoate + (6R)-5,10-methylene-5,6,7,8-tetrahydrofolate + H2O = 2-dehydropantoate + (6S)-5,6,7,8-tetrahydrofolate. It participates in cofactor biosynthesis; (R)-pantothenate biosynthesis; (R)-pantoate from 3-methyl-2-oxobutanoate: step 1/2. In terms of biological role, catalyzes the reversible reaction in which hydroxymethyl group from 5,10-methylenetetrahydrofolate is transferred onto alpha-ketoisovalerate to form ketopantoate. This chain is 3-methyl-2-oxobutanoate hydroxymethyltransferase, found in Rhodospirillum centenum (strain ATCC 51521 / SW).